Consider the following 173-residue polypeptide: Translocon-associated protein subunit delta (173 aa).

A signal peptide spans Met-1–Ala-23. Residues Glu-24–Gly-144 are Lumenal-facing. Cys-26 and Cys-57 form a disulfide bridge. Lys-73 is covalently cross-linked (Glycyl lysine isopeptide (Lys-Gly) (interchain with G-Cter in ubiquitin)). The helical transmembrane segment at Pro-145–Phe-165 threads the bilayer. The Cytoplasmic portion of the chain corresponds to Ser-166–Ala-173.

The protein belongs to the TRAP-delta family. As to quaternary structure, heterotetramer of TRAP-alpha, TRAP-beta, TRAP-delta and TRAP-gamma.

The protein localises to the endoplasmic reticulum membrane. In terms of biological role, TRAP proteins are part of a complex whose function is to bind calcium to the ER membrane and thereby regulate the retention of ER resident proteins. This chain is Translocon-associated protein subunit delta (SSR4), found in Homo sapiens (Human).